Reading from the N-terminus, the 81-residue chain is ATP synthase subunit C, plastid (81 aa).

A run of 2 helical transmembrane segments spans residues 3 to 23 (PIIS…ASIG) and 57 to 77 (LAFM…LLFA).

It belongs to the ATPase C chain family. F-type ATPases have 2 components, F(1) - the catalytic core - and F(0) - the membrane proton channel. F(1) has five subunits: alpha(3), beta(3), gamma(1), delta(1), epsilon(1). F(0) has four main subunits: a(1), b(1), b'(1) and c(10-14). The alpha and beta chains form an alternating ring which encloses part of the gamma chain. F(1) is attached to F(0) by a central stalk formed by the gamma and epsilon chains, while a peripheral stalk is formed by the delta, b and b' chains.

Its subcellular location is the plastid membrane. Functionally, f(1)F(0) ATP synthase produces ATP from ADP in the presence of a proton or sodium gradient. F-type ATPases consist of two structural domains, F(1) containing the extramembraneous catalytic core and F(0) containing the membrane proton channel, linked together by a central stalk and a peripheral stalk. During catalysis, ATP synthesis in the catalytic domain of F(1) is coupled via a rotary mechanism of the central stalk subunits to proton translocation. Its function is as follows. Key component of the F(0) channel; it plays a direct role in translocation across the membrane. A homomeric c-ring of between 10-14 subunits forms the central stalk rotor element with the F(1) delta and epsilon subunits. The chain is ATP synthase subunit C, plastid from Cuscuta gronovii (Common dodder).